Here is a 536-residue protein sequence, read N- to C-terminus: Trigger factor (536 aa).

The 86-residue stretch at 164 to 249 (GDQVIIDFAG…VKEVKVPAAT (86 aa)) folds into the PPIase FKBP-type domain. The disordered stretch occupies residues 439 to 536 (IEADDDSGHV…APAKKAAAKK (98 aa)). The span at 472-502 (TKKEAVKDEAKAEEAPAKKAPAKKAEPKAEA) shows a compositional bias: basic and acidic residues. The segment covering 503 to 515 (KPAAAKKAAPAKA) has biased composition (low complexity). A compositionally biased stretch (basic and acidic residues) spans 516–525 (AAEEKAEPAK). A compositionally biased stretch (basic residues) spans 527–536 (APAKKAAAKK).

The protein belongs to the FKBP-type PPIase family. Tig subfamily.

It localises to the cytoplasm. It catalyses the reaction [protein]-peptidylproline (omega=180) = [protein]-peptidylproline (omega=0). Functionally, involved in protein export. Acts as a chaperone by maintaining the newly synthesized protein in an open conformation. Functions as a peptidyl-prolyl cis-trans isomerase. The sequence is that of Trigger factor from Sphingopyxis alaskensis (strain DSM 13593 / LMG 18877 / RB2256) (Sphingomonas alaskensis).